The chain runs to 245 residues: NAD-dependent protein deacylase (245 aa).

Positions 1-237 (MNFPYRNIVV…PKLVEELLAH (237 aa)) constitute a Deacetylase sirtuin-type domain. 13 to 32 (GAGISAESGIQTFRAQDGLW) contributes to the NAD(+) binding site. Positions 57 and 60 each coordinate substrate. 94 to 97 (QNID) is an NAD(+) binding site. Histidine 112 acts as the Proton acceptor in catalysis. Zn(2+) contacts are provided by cysteine 120 and cysteine 139. Residues 179-181 (GTS), 205-207 (NLE), and alanine 223 each bind NAD(+).

It belongs to the sirtuin family. Class III subfamily. It depends on Zn(2+) as a cofactor.

Its subcellular location is the cytoplasm. The catalysed reaction is N(6)-acetyl-L-lysyl-[protein] + NAD(+) + H2O = 2''-O-acetyl-ADP-D-ribose + nicotinamide + L-lysyl-[protein]. It carries out the reaction N(6)-succinyl-L-lysyl-[protein] + NAD(+) + H2O = 2''-O-succinyl-ADP-D-ribose + nicotinamide + L-lysyl-[protein]. Its function is as follows. NAD-dependent lysine deacetylase and desuccinylase that specifically removes acetyl and succinyl groups on target proteins. Modulates the activities of several proteins which are inactive in their acylated form. This is NAD-dependent protein deacylase from Vibrio vulnificus (strain CMCP6).